We begin with the raw amino-acid sequence, 58 residues long: uncharacterized protein (58 aa).

The protein resides in the plastid. The protein localises to the chloroplast. This is an uncharacterized protein from Chlamydomonas reinhardtii (Chlamydomonas smithii).